An 80-amino-acid chain; its full sequence is Exodeoxyribonuclease 7 small subunit (80 aa).

It belongs to the XseB family. As to quaternary structure, heterooligomer composed of large and small subunits.

It is found in the cytoplasm. It catalyses the reaction Exonucleolytic cleavage in either 5'- to 3'- or 3'- to 5'-direction to yield nucleoside 5'-phosphates.. Its function is as follows. Bidirectionally degrades single-stranded DNA into large acid-insoluble oligonucleotides, which are then degraded further into small acid-soluble oligonucleotides. The protein is Exodeoxyribonuclease 7 small subunit of Pseudomonas entomophila (strain L48).